Reading from the N-terminus, the 284-residue chain is NADH-cytochrome b5 reductase 1 (284 aa).

Residues 7–27 (KLVVVIVIVVVPLLFKFIIGP) traverse the membrane as a helical segment. One can recognise an FAD-binding FR-type domain in the interval 38 to 142 (NDFQSFPLVE…KGPRGNYHYE (105 aa)). Residues 122-137 (GELK…GPRG) and 148-180 (HLGM…KVSL) contribute to the FAD site.

This sequence belongs to the flavoprotein pyridine nucleotide cytochrome reductase family. As to quaternary structure, monomer. Component of the 2-(3-amino-3-carboxypropyl)histidine synthase complex composed of DPH1, DPH2, KTI11/DPH3 and a NADH-dependent reductase, predominantly CBR1. Interacts with KTI11/DPH3. Interacts with STE20. FAD serves as cofactor.

It is found in the mitochondrion outer membrane. The enzyme catalyses 2 Fe(III)-[cytochrome b5] + NADH = 2 Fe(II)-[cytochrome b5] + NAD(+) + H(+). The catalysed reaction is 2 Fe(3+)-[Dph3] + NADH = 2 Fe(2+)-[Dph3] + NAD(+) + H(+). It participates in protein modification; peptidyl-diphthamide biosynthesis. With respect to regulation, competitively inhibited by NAD(+). Inhibited by mercurials such as p-chloromercuribenzoate (PCMB) and HgCl(2). Enzymatic activity increases under anaerobic conditions. In terms of biological role, NADH-dependent reductase for KTI11/DPH3 and cytochrome b5. Required for the first step of diphthamide biosynthesis, a post-translational modification of histidine which occurs in elongation factor 2. DPH1 and DPH2 transfer a 3-amino-3-carboxypropyl (ACP) group from S-adenosyl-L-methionine (SAM) to a histidine residue, the reaction is assisted by a reduction system comprising KTI11/DPH3 and a NADH-dependent reductase, predominantly CBR1. By reducing KTI11/DPH3, also involved in the formation of the tRNA wobble base modification mcm5s 2U (5-methoxycarbonylmethyl-2-thiouridine), mediated by the elongator complex. The cytochrome b5/NADH cytochrome b5 reductase electron transfer system supports the catalytic activity of several sterol biosynthetic enzymes. Plays a role in bud morphology. The protein is NADH-cytochrome b5 reductase 1 (CBR1) of Saccharomyces cerevisiae (strain ATCC 204508 / S288c) (Baker's yeast).